We begin with the raw amino-acid sequence, 620 residues long: Chaperone protein HscA homolog (620 aa).

It belongs to the heat shock protein 70 family.

In terms of biological role, chaperone involved in the maturation of iron-sulfur cluster-containing proteins. Has a low intrinsic ATPase activity which is markedly stimulated by HscB. The polypeptide is Chaperone protein HscA homolog (Shewanella piezotolerans (strain WP3 / JCM 13877)).